Here is a 1557-residue protein sequence, read N- to C-terminus: ABC transporter atnG (1557 aa).

The next 5 membrane-spanning stretches (helical) occupy residues 27–47 (FTLY…LILA), 70–90 (LKLL…AFWM), 99–119 (LTIA…YLIH), 131–151 (IISI…RTIW), and 159–179 (VSAI…LETW). N202 and N249 each carry an N-linked (GlcNAc...) asparagine glycan. 6 helical membrane passes run 256 to 276 (AGAM…AGVF), 311 to 331 (ATLL…ATAT), 385 to 405 (YIHD…LLYN), 412 to 432 (IAPI…AMMA), 490 to 510 (LLIA…IVSF), and 531 to 551 (LTSL…VESI). Residues 279–556 (LCQSGFIISQ…LVESISETAM (278 aa)) enclose the ABC transmembrane type-1 1 domain. Positions 593 to 829 (AFEVDVGWKN…LDYIQGFAIA (237 aa)) constitute an ABC transporter 1 domain. 625–632 (GAVGCGKT) is a binding site for ATP. An N-linked (GlcNAc...) asparagine glycan is attached at N667. Residues 882–902 (LVYFGLMAIFVFLQAFPTVWV) form a helical membrane-spanning segment. The region spanning 882 to 1162 (LVYFGLMAIF…LITDWTVLET (281 aa)) is the ABC transmembrane type-1 2 domain. N916 is a glycosylation site (N-linked (GlcNAc...) asparagine). A run of 4 helical transmembrane segments spans residues 921–941 (IGVY…TACF), 996–1016 (AVLQ…IIAV), 1020–1040 (YITA…TFYM), and 1105–1125 (LSLV…GIAV). N1132 carries N-linked (GlcNAc...) asparagine glycosylation. The helical transmembrane segment at 1135-1155 (SLGLALVNVVSLSASVKALIT) threads the bilayer. The ABC transporter 2 domain maps to 1199–1431 (VEYKNVSAFY…PSVFRELYKS (233 aa)). 2 N-linked (GlcNAc...) asparagine glycosylation sites follow: N1203 and N1218. Residue 1233-1240 (GRSGSGKS) coordinates ATP. Disordered stretches follow at residues 1439–1464 (ERQE…EELR) and 1503–1557 (RTRS…RGLH). Residues 1507–1522 (RSRDHSAERRESKRYS) are compositionally biased toward basic and acidic residues.

Belongs to the ABC transporter superfamily. ABCC family. Conjugate transporter (TC 3.A.1.208) subfamily.

The protein resides in the cell membrane. Functionally, ABC transporter; part of the gene cluster that mediates the biosynthesis of aspercryptins, linear lipopeptides built from six amino acids including 2 highly unusual and nonproteogenic amino acids, 2-amino-octanoic acid (2aoa) and 2-amino-dodecanol (2adol). This Emericella nidulans (strain FGSC A4 / ATCC 38163 / CBS 112.46 / NRRL 194 / M139) (Aspergillus nidulans) protein is ABC transporter atnG.